We begin with the raw amino-acid sequence, 31 residues long: Cyclotide vico-A (31 aa).

A cross-link (cyclopeptide (Gly-Asn)) is located at residues 1-31 (GSIPCAESCVYIPCFTGIAGCSCKNKVCYYN). Cystine bridges form between cysteine 5/cysteine 21, cysteine 9/cysteine 23, and cysteine 14/cysteine 28.

The protein belongs to the cyclotide family. Bracelet subfamily. In terms of processing, this is a cyclic peptide.

Functionally, probably participates in a plant defense mechanism. This Viola cotyledon (Violeta) protein is Cyclotide vico-A.